The primary structure comprises 212 residues: Imidazole glycerol phosphate synthase subunit HisH (212 aa).

Positions 3–212 (DIAIVDYGMG…LGNFVRWKPV (210 aa)) constitute a Glutamine amidotransferase type-1 domain. The active-site Nucleophile is C82. Catalysis depends on residues H191 and E193.

In terms of assembly, heterodimer of HisH and HisF.

The protein resides in the cytoplasm. The catalysed reaction is 5-[(5-phospho-1-deoxy-D-ribulos-1-ylimino)methylamino]-1-(5-phospho-beta-D-ribosyl)imidazole-4-carboxamide + L-glutamine = D-erythro-1-(imidazol-4-yl)glycerol 3-phosphate + 5-amino-1-(5-phospho-beta-D-ribosyl)imidazole-4-carboxamide + L-glutamate + H(+). The enzyme catalyses L-glutamine + H2O = L-glutamate + NH4(+). The protein operates within amino-acid biosynthesis; L-histidine biosynthesis; L-histidine from 5-phospho-alpha-D-ribose 1-diphosphate: step 5/9. IGPS catalyzes the conversion of PRFAR and glutamine to IGP, AICAR and glutamate. The HisH subunit catalyzes the hydrolysis of glutamine to glutamate and ammonia as part of the synthesis of IGP and AICAR. The resulting ammonia molecule is channeled to the active site of HisF. In Nitrosospira multiformis (strain ATCC 25196 / NCIMB 11849 / C 71), this protein is Imidazole glycerol phosphate synthase subunit HisH.